Consider the following 436-residue polypeptide: Trigger factor (436 aa).

In terms of domain architecture, PPIase FKBP-type spans 161–248 (TDRVTIDLYG…LKKVEQYRLP (88 aa)).

Belongs to the FKBP-type PPIase family. Tig subfamily.

The protein localises to the cytoplasm. The catalysed reaction is [protein]-peptidylproline (omega=180) = [protein]-peptidylproline (omega=0). In terms of biological role, involved in protein export. Acts as a chaperone by maintaining the newly synthesized protein in an open conformation. Functions as a peptidyl-prolyl cis-trans isomerase. This chain is Trigger factor, found in Baumannia cicadellinicola subsp. Homalodisca coagulata.